The sequence spans 271 residues: MVRPRKLFAQHWLKSEKALDAIVKAAECSTNDRILEIGPGTGILTRRLLPAVQSLVAVEIDRDLCELLAKQLGKKENFLLLQGDFLTIDLAANLGSFPKFQKPNKVVANIPYNITGPIIEKLLGTISNPNLEPFDSIVLLIQKEVAERLYAKSGSRTFGALSVRVQYLADCEFICDVPASAFHPPPKVDSAVVRLRPRQIEIPVNDPKRLENLVKLGFGAKRKMLRNNLQSVVDRDRLSQLLEQLNINPQARAEDISTQQWVKLANLLGVE.

S-adenosyl-L-methionine is bound by residues His-11, Leu-13, Gly-38, Glu-59, Asp-84, and Asn-109.

Belongs to the class I-like SAM-binding methyltransferase superfamily. rRNA adenine N(6)-methyltransferase family. RsmA subfamily.

It localises to the cytoplasm. The catalysed reaction is adenosine(1518)/adenosine(1519) in 16S rRNA + 4 S-adenosyl-L-methionine = N(6)-dimethyladenosine(1518)/N(6)-dimethyladenosine(1519) in 16S rRNA + 4 S-adenosyl-L-homocysteine + 4 H(+). Functionally, specifically dimethylates two adjacent adenosines (A1518 and A1519) in the loop of a conserved hairpin near the 3'-end of 16S rRNA in the 30S particle. May play a critical role in biogenesis of 30S subunits. The sequence is that of Ribosomal RNA small subunit methyltransferase A from Nostoc sp. (strain PCC 7120 / SAG 25.82 / UTEX 2576).